Consider the following 146-residue polypeptide: Deoxyuridine 5'-triphosphate nucleotidohydrolase (146 aa).

Residues 66–68 (RSG), Asn-79, and 83–85 (TID) each bind substrate.

It belongs to the dUTPase family. The cofactor is Mg(2+).

It catalyses the reaction dUTP + H2O = dUMP + diphosphate + H(+). It participates in pyrimidine metabolism; dUMP biosynthesis; dUMP from dCTP (dUTP route): step 2/2. Functionally, this enzyme is involved in nucleotide metabolism: it produces dUMP, the immediate precursor of thymidine nucleotides and it decreases the intracellular concentration of dUTP so that uracil cannot be incorporated into DNA. The polypeptide is Deoxyuridine 5'-triphosphate nucleotidohydrolase (Citrifermentans bemidjiense (strain ATCC BAA-1014 / DSM 16622 / JCM 12645 / Bem) (Geobacter bemidjiensis)).